Consider the following 312-residue polypeptide: Beta-lactamase regulatory protein BlaB (312 aa).

This Streptomyces cacaoi protein is Beta-lactamase regulatory protein BlaB (blaB).